A 78-amino-acid polypeptide reads, in one-letter code: D-alanyl carrier protein (78 aa).

A Carrier domain is found at 1–78 (MAFRENVLEI…MIITQLEALK (78 aa)). An O-(pantetheine 4'-phosphoryl)serine modification is found at Ser-36.

The protein belongs to the DltC family. 4'-phosphopantetheine is transferred from CoA to a specific serine of apo-DCP.

The protein resides in the cytoplasm. Its pathway is cell wall biogenesis; lipoteichoic acid biosynthesis. Functionally, carrier protein involved in the D-alanylation of lipoteichoic acid (LTA). The loading of thioester-linked D-alanine onto DltC is catalyzed by D-alanine--D-alanyl carrier protein ligase DltA. The DltC-carried D-alanyl group is further transferred to cell membrane phosphatidylglycerol (PG) by forming an ester bond, probably catalyzed by DltD. D-alanylation of LTA plays an important role in modulating the properties of the cell wall in Gram-positive bacteria, influencing the net charge of the cell wall. In Listeria innocua serovar 6a (strain ATCC BAA-680 / CLIP 11262), this protein is D-alanyl carrier protein.